The chain runs to 281 residues: Ribosomal RNA small subunit methyltransferase A (281 aa).

6 residues coordinate S-adenosyl-L-methionine: Asn18, Leu20, Gly45, Glu66, Asp91, and Asn118.

This sequence belongs to the class I-like SAM-binding methyltransferase superfamily. rRNA adenine N(6)-methyltransferase family. RsmA subfamily.

The protein localises to the cytoplasm. The catalysed reaction is adenosine(1518)/adenosine(1519) in 16S rRNA + 4 S-adenosyl-L-methionine = N(6)-dimethyladenosine(1518)/N(6)-dimethyladenosine(1519) in 16S rRNA + 4 S-adenosyl-L-homocysteine + 4 H(+). In terms of biological role, specifically dimethylates two adjacent adenosines (A1518 and A1519) in the loop of a conserved hairpin near the 3'-end of 16S rRNA in the 30S particle. May play a critical role in biogenesis of 30S subunits. This Histophilus somni (strain 129Pt) (Haemophilus somnus) protein is Ribosomal RNA small subunit methyltransferase A.